Consider the following 115-residue polypeptide: Thiosulfate:glutathione sulfurtransferase (115 aa).

Residues 17 to 115 (ASGRARLFDV…AYREWLEKES (99 aa)) form the Rhodanese domain. Cysteine 79 acts as the Cysteine persulfide intermediate in catalysis.

In terms of tissue distribution, highly expressed in kidney, liver and skeletal muscle. Lower levels of expression in heart, colon, thymus, spleen, placenta and lung. Weakly expressed in brain, small intestine and peripheral blood leukocytes. Expressed at high levels in the breast carcinoma cell lines MCF-7 and MDA-MB-468 and at a lower level in the breast carcinoma cell line MDA-MB-231, the colon carcinoma call line LoVo and the lung carcinoma cell line A-549. No expression in the cell lines EFO-27 and HeLa, or the normal breast tissue cell lines MCF-10A and H184A1. Detected in invasive ductal carcinoma, but not in the adjacent tissues.

It localises to the cytoplasm. It is found in the perinuclear region. It catalyses the reaction thiosulfate + glutathione = S-sulfanylglutathione + sulfite + H(+). It carries out the reaction thiosulfate + 2 glutathione = glutathione disulfide + hydrogen sulfide + sulfite + 2 H(+). GSS(-) is a potent inhibitor of TSTD1, since the presence of the sulfur dioxygenase (SDO) strongly increases the TSTD1 catalytic activity. In terms of biological role, thiosulfate:glutathione sulfurtransferase (TST) required to produce S-sulfanylglutathione (GSS(-)), a central intermediate in hydrogen sulfide metabolism. Provides the link between the first step in mammalian H(2)S metabolism performed by the sulfide:quinone oxidoreductase (SQOR) which catalyzes the conversion of H(2)S to thiosulfate, and the sulfur dioxygenase (SDO) which uses GSS(-) as substrate. The thermodynamic coupling of the irreversible SDO and reversible TST reactions provides a model for the physiologically relevant reaction with thiosulfate as the sulfane donor. GSS(-) spontaneously reacts with glutathione to form glutathione disulfide. The sequence is that of Thiosulfate:glutathione sulfurtransferase (TSTD1) from Homo sapiens (Human).